A 397-amino-acid chain; its full sequence is Probable N-succinyldiaminopimelate aminotransferase DapC (397 aa).

Pyridoxal 5'-phosphate contacts are provided by residues 109–110 (GS) and 218–222 (DGMAE). Lys232 carries the N6-(pyridoxal phosphate)lysine modification.

It belongs to the class-III pyridoxal-phosphate-dependent aminotransferase family. As to quaternary structure, homodimer. Pyridoxal 5'-phosphate is required as a cofactor.

The protein resides in the cytoplasm. It carries out the reaction N-succinyl-(2S,6S)-2,6-diaminopimelate + 2-oxoglutarate = (S)-2-succinylamino-6-oxoheptanedioate + L-glutamate. The protein operates within amino-acid biosynthesis; L-lysine biosynthesis via DAP pathway; LL-2,6-diaminopimelate from (S)-tetrahydrodipicolinate (succinylase route): step 2/3. Involved in the lysine biosynthetic pathways. It catalyzes the transfer of an amino group from L-glutamate to N-succinyl-2-l-amino-6-oxoheptanedioate (N-succinyl-2-l-amino-6-ketopimelate) in a PLP-dependent reaction, yielding as products N-succinyl-l-2,6-diaminoheptanedioate (N-succinyl-diaminopimelate) and 2-oxoglutarate. The polypeptide is Probable N-succinyldiaminopimelate aminotransferase DapC (dapC) (Mycobacterium tuberculosis (strain CDC 1551 / Oshkosh)).